The sequence spans 756 residues: U3 small nucleolar RNA-associated protein 25 homolog (756 aa).

The segment at 1-159 is disordered; that stretch reads MGKRGSRSQS…SQTSPEEFTD (159 aa). Promotes p53/TP53 degradation stretches follow at residues 1 to 185 and 573 to 635; these read MGKR…SLKA and VQLP…KKEE. S10 carries the phosphoserine modification. Over residues 25-43 the composition is skewed to basic and acidic residues; the sequence is RDFGEEHPFYDRVSRKEAK. A phosphoserine mark is found at S50, S52, S58, S60, S62, and S64. 2 stretches are compositionally biased toward acidic residues: residues 54–64 and 84–121; these read DSSDSESDSES and EEEEEDEEEEEEEDSIVDDAEMNDEDGGSDVSVEEEMA. A represses p53/TP53 degradation region spans residues 636–697; that stretch reads LNFTHICEYT…YELPTYPHFY (62 aa).

Belongs to the UTP25 family. As to quaternary structure, interacts with CAPN3; the interaction is required for CAPN3 translocation to the nucleolus. Post-translationally, phosphorylated. Phosphorylation is required to promote p53/TP53 degradation in the nucleolus which promotes cell cycle progression and liver development. Expressed in colon.

The protein localises to the nucleus. Its subcellular location is the nucleolus. Its function is as follows. Component of the ribosomal small subunit processome for the biogenesis of ribosomes, functions in pre-ribosomal RNA (pre-rRNA) processing. Essential for embryonic development in part through the regulation of p53 pathway. Controls the expansion growth of digestive organs and liver. Also involved in the sympathetic neuronal development. Mediates, with CAPN3, the proteasome-independent degradation of p53/TP53. The polypeptide is U3 small nucleolar RNA-associated protein 25 homolog (Homo sapiens (Human)).